We begin with the raw amino-acid sequence, 262 residues long: Tryptophan synthase alpha chain (262 aa).

Catalysis depends on proton acceptor residues Glu-48 and Asp-59.

The protein belongs to the TrpA family. Tetramer of two alpha and two beta chains.

It catalyses the reaction (1S,2R)-1-C-(indol-3-yl)glycerol 3-phosphate + L-serine = D-glyceraldehyde 3-phosphate + L-tryptophan + H2O. The protein operates within amino-acid biosynthesis; L-tryptophan biosynthesis; L-tryptophan from chorismate: step 5/5. Functionally, the alpha subunit is responsible for the aldol cleavage of indoleglycerol phosphate to indole and glyceraldehyde 3-phosphate. The chain is Tryptophan synthase alpha chain from Helicobacter pylori (strain HPAG1).